The sequence spans 103 residues: Small ribosomal subunit protein uS10 (103 aa).

Belongs to the universal ribosomal protein uS10 family. In terms of assembly, part of the 30S ribosomal subunit.

In terms of biological role, involved in the binding of tRNA to the ribosomes. This chain is Small ribosomal subunit protein uS10, found in Jannaschia sp. (strain CCS1).